Consider the following 162-residue polypeptide: Large ribosomal subunit protein uL10 (162 aa).

It belongs to the universal ribosomal protein uL10 family. Part of the ribosomal stalk of the 50S ribosomal subunit. The N-terminus interacts with L11 and the large rRNA to form the base of the stalk. The C-terminus forms an elongated spine to which L12 dimers bind in a sequential fashion forming a multimeric L10(L12)X complex.

Functionally, forms part of the ribosomal stalk, playing a central role in the interaction of the ribosome with GTP-bound translation factors. The polypeptide is Large ribosomal subunit protein uL10 (Phytoplasma mali (strain AT)).